The sequence spans 547 residues: Membrane protein insertase YidC (547 aa).

The next 6 membrane-spanning stretches (helical) occupy residues 6-26 (LILV…WQKY), 328-348 (VVDY…LEAI), 351-371 (LVGN…AVFF), 425-445 (LPIL…LGAV), 459-479 (LASA…MFVQ), and 499-519 (PLIF…YWVV).

It belongs to the OXA1/ALB3/YidC family. Type 1 subfamily. Interacts with the Sec translocase complex via SecD. Specifically interacts with transmembrane segments of nascent integral membrane proteins during membrane integration.

It is found in the cell inner membrane. Required for the insertion and/or proper folding and/or complex formation of integral membrane proteins into the membrane. Involved in integration of membrane proteins that insert both dependently and independently of the Sec translocase complex, as well as at least some lipoproteins. Aids folding of multispanning membrane proteins. This chain is Membrane protein insertase YidC, found in Dechloromonas aromatica (strain RCB).